A 164-amino-acid polypeptide reads, in one-letter code: Protein-export protein SecB (164 aa).

The protein belongs to the SecB family. In terms of assembly, homotetramer, a dimer of dimers. One homotetramer interacts with 1 SecA dimer.

It is found in the cytoplasm. In terms of biological role, one of the proteins required for the normal export of preproteins out of the cell cytoplasm. It is a molecular chaperone that binds to a subset of precursor proteins, maintaining them in a translocation-competent state. It also specifically binds to its receptor SecA. The chain is Protein-export protein SecB from Herminiimonas arsenicoxydans.